The following is a 157-amino-acid chain: S-ribosylhomocysteine lyase (157 aa).

His-54, His-58, and Cys-126 together coordinate Fe cation.

Belongs to the LuxS family. As to quaternary structure, homodimer. Requires Fe cation as cofactor.

It carries out the reaction S-(5-deoxy-D-ribos-5-yl)-L-homocysteine = (S)-4,5-dihydroxypentane-2,3-dione + L-homocysteine. Involved in the synthesis of autoinducer 2 (AI-2) which is secreted by bacteria and is used to communicate both the cell density and the metabolic potential of the environment. The regulation of gene expression in response to changes in cell density is called quorum sensing. Catalyzes the transformation of S-ribosylhomocysteine (RHC) to homocysteine (HC) and 4,5-dihydroxy-2,3-pentadione (DPD). In Bacillus pumilus (strain SAFR-032), this protein is S-ribosylhomocysteine lyase.